The chain runs to 710 residues: Interferon-induced GTP-binding protein Mx2 (710 aa).

The tract at residues 1 to 87 (MSLSFRPLKY…RSKGPENNLY (87 aa)) is disordered. 2 stretches are compositionally biased toward polar residues: residues 39 to 50 (QTMSPPQWQVEE) and 58 to 79 (NNFSQLNLDPQQPEANGGQQRS). In terms of domain architecture, Dynamin-type G spans 112-383 (DLALPAIAVI…LIWHINKSLP (272 aa)). The G1 motif stretch occupies residues 122-129 (GDQSSGKS). Residue 122-129 (GDQSSGKS) participates in GTP binding. A G2 motif region spans residues 147 to 149 (ITR). The segment at 221 to 224 (DLPG) is G3 motif. Residues 221-225 (DLPGI) and 290-293 (TKPD) contribute to the GTP site. A G4 motif region spans residues 290–293 (TKPD). The G5 motif stretch occupies residues 322–325 (KCRG). The GED domain maps to 619–710 (IVEIGVHLNA…ALYEFPHFKG (92 aa)).

This sequence belongs to the TRAFAC class dynamin-like GTPase superfamily. Dynamin/Fzo/YdjA family.

The protein localises to the cytoplasm. It is found in the nucleus. In terms of biological role, interferon-induced dynamin-like GTPase with antiviral activity against vesicular stomatitis virus (VSV). In Bubalus bubalis (Domestic water buffalo), this protein is Interferon-induced GTP-binding protein Mx2 (MX2).